Reading from the N-terminus, the 317-residue chain is tRNA dimethylallyltransferase (317 aa).

19–26 serves as a coordination point for ATP; the sequence is GPTASGKS. Residue 21-26 coordinates substrate; the sequence is TASGKS. The interval 44–47 is interaction with substrate tRNA; that stretch reads DSMQ.

The protein belongs to the IPP transferase family. As to quaternary structure, monomer. It depends on Mg(2+) as a cofactor.

The catalysed reaction is adenosine(37) in tRNA + dimethylallyl diphosphate = N(6)-dimethylallyladenosine(37) in tRNA + diphosphate. Its function is as follows. Catalyzes the transfer of a dimethylallyl group onto the adenine at position 37 in tRNAs that read codons beginning with uridine, leading to the formation of N6-(dimethylallyl)adenosine (i(6)A). The sequence is that of tRNA dimethylallyltransferase from Methylorubrum populi (strain ATCC BAA-705 / NCIMB 13946 / BJ001) (Methylobacterium populi).